We begin with the raw amino-acid sequence, 229 residues long: Glutathione S-transferase 3 (229 aa).

Alanine 2 is subject to Blocked amino end (Ala). A GST N-terminal domain is found at 3–83; it reads AKPVLYYFNG…YIAGKYNLYG (81 aa). Residues tyrosine 9, 54 to 55, and 67 to 68 each bind glutathione; these read QV and QT. Residues 85 to 207 form the GST C-terminal domain; sequence DLKERALIDM…LAPGSKRKPI (123 aa).

Belongs to the GST superfamily. Alpha family. Homodimer or heterodimer (with a subunit from group CL-4).

It localises to the cytoplasm. The enzyme catalyses RX + glutathione = an S-substituted glutathione + a halide anion + H(+). Catalyzes the conjugation of GSH to a wide variety of electrophilic alkylating agents. Also involved in the metabolism of lipid hydroperoxides, prostaglandins and leukotriene A4 and in binding of non-substrate hydrophobic ligands such as bile acids, a number of drugs and thyroid hormones. This GST does not exhibit peroxidase activity. This is Glutathione S-transferase 3 from Gallus gallus (Chicken).